The sequence spans 149 residues: 3-dehydroquinate dehydratase (149 aa).

Residue Y26 is the Proton acceptor of the active site. Substrate contacts are provided by N77, H83, and D90. Residue H103 is the Proton donor of the active site. Substrate-binding positions include L104–S105 and R114.

The protein belongs to the type-II 3-dehydroquinase family. As to quaternary structure, homododecamer.

The enzyme catalyses 3-dehydroquinate = 3-dehydroshikimate + H2O. The protein operates within metabolic intermediate biosynthesis; chorismate biosynthesis; chorismate from D-erythrose 4-phosphate and phosphoenolpyruvate: step 3/7. Functionally, catalyzes a trans-dehydration via an enolate intermediate. This is 3-dehydroquinate dehydratase from Vibrio parahaemolyticus serotype O3:K6 (strain RIMD 2210633).